The primary structure comprises 72 residues: Translation initiation factor IF-1 (72 aa).

The S1-like domain maps to 1 to 72 (MAKSDVIEME…SKGRIVYRAR (72 aa)).

It belongs to the IF-1 family. Component of the 30S ribosomal translation pre-initiation complex which assembles on the 30S ribosome in the order IF-2 and IF-3, IF-1 and N-formylmethionyl-tRNA(fMet); mRNA recruitment can occur at any time during PIC assembly.

Its subcellular location is the cytoplasm. Its function is as follows. One of the essential components for the initiation of protein synthesis. Stabilizes the binding of IF-2 and IF-3 on the 30S subunit to which N-formylmethionyl-tRNA(fMet) subsequently binds. Helps modulate mRNA selection, yielding the 30S pre-initiation complex (PIC). Upon addition of the 50S ribosomal subunit IF-1, IF-2 and IF-3 are released leaving the mature 70S translation initiation complex. The chain is Translation initiation factor IF-1 from Marinobacter nauticus (strain ATCC 700491 / DSM 11845 / VT8) (Marinobacter aquaeolei).